A 115-amino-acid chain; its full sequence is Macrophage migration inhibitory factor (115 aa).

Pro2 acts as the Proton acceptor; via imino nitrogen in catalysis. Substrate is bound by residues Lys33 and Ile65. N6-acetyllysine; alternate is present on Lys78. At Lys78 the chain carries N6-succinyllysine; alternate. Residue Asn98 participates in substrate binding.

It belongs to the MIF family. As to quaternary structure, homotrimer. Interacts with CD74 and CXCR2 extracellular domain and COPS5. Interacts with the USO1 and BNIPL.

It localises to the secreted. It is found in the cytoplasm. The enzyme catalyses 3-phenylpyruvate = enol-phenylpyruvate. The catalysed reaction is L-dopachrome = 5,6-dihydroxyindole-2-carboxylate. In terms of biological role, pro-inflammatory cytokine involved in the innate immune response to bacterial pathogens. The expression of MIF at sites of inflammation suggests a role as mediator in regulating the function of macrophages in host defense. Counteracts the anti-inflammatory activity of glucocorticoids. Has phenylpyruvate tautomerase and dopachrome tautomerase activity (in vitro), but the physiological substrate is not known. It is not clear whether the tautomerase activity has any physiological relevance, and whether it is important for cytokine activity. This Mus musculus (Mouse) protein is Macrophage migration inhibitory factor.